A 314-amino-acid polypeptide reads, in one-letter code: Beta-ketoacyl-[acyl-carrier-protein] synthase III (314 aa).

Active-site residues include cysteine 112 and histidine 241. Residues 242–246 (QANIR) form an ACP-binding region. Asparagine 271 is a catalytic residue.

The protein belongs to the thiolase-like superfamily. FabH family. As to quaternary structure, homodimer.

It is found in the cytoplasm. It catalyses the reaction malonyl-[ACP] + acetyl-CoA + H(+) = 3-oxobutanoyl-[ACP] + CO2 + CoA. Its pathway is lipid metabolism; fatty acid biosynthesis. Catalyzes the condensation reaction of fatty acid synthesis by the addition to an acyl acceptor of two carbons from malonyl-ACP. Catalyzes the first condensation reaction which initiates fatty acid synthesis and may therefore play a role in governing the total rate of fatty acid production. Possesses both acetoacetyl-ACP synthase and acetyl transacylase activities. Its substrate specificity determines the biosynthesis of branched-chain and/or straight-chain of fatty acids. The chain is Beta-ketoacyl-[acyl-carrier-protein] synthase III from Vesicomyosocius okutanii subsp. Calyptogena okutanii (strain HA).